Consider the following 204-residue polypeptide: uncharacterized protein (204 aa).

The protein localises to the cytoplasm. It localises to the nucleus. This is an uncharacterized protein from Schizosaccharomyces pombe (strain 972 / ATCC 24843) (Fission yeast).